Consider the following 101-residue polypeptide: Vacuolar ATPase assembly integral membrane protein VMA21 (101 aa).

Residues 1–25 (MERLDKAALNALQPSDFRNESSLAS) are Cytoplasmic-facing. The chain crosses the membrane as a helical span at residues 26-46 (TLKTLLFFTALMITVPIGLYF). Residues 47–65 (TTKSYVFEGAFGMSNRDSY) are Lumenal-facing. A helical membrane pass occupies residues 66–86 (FYAAIVAVVAVHVVLALFVYV). Residues 87–101 (AWNEGSRQWREGKQD) are Cytoplasmic-facing.

The protein belongs to the VMA21 family. As to quaternary structure, associates with the V0 complex of the vacuolar ATPase (V-ATPase). Interacts with ATP6AP2.

The protein localises to the endoplasmic reticulum membrane. The protein resides in the endoplasmic reticulum-Golgi intermediate compartment membrane. Its subcellular location is the cytoplasmic vesicle. It localises to the COPII-coated vesicle membrane. In terms of biological role, required for the assembly of the V0 complex of the vacuolar ATPase (V-ATPase) in the endoplasmic reticulum. This chain is Vacuolar ATPase assembly integral membrane protein VMA21, found in Bos taurus (Bovine).